The sequence spans 310 residues: Protoheme IX farnesyltransferase 2 (310 aa).

9 helical membrane passes run 25–45, 49–69, 87–107, 120–139, 145–165, 176–196, 220–240, 242–262, and 277–297; these read PGII…AAKG, LVLM…GCAI, RVTV…LALG, ALAL…VYSL, SVYG…VGYC, AILL…IAIF, LHIV…PLAG, TGIA…AMAL, and QVFG…ALDF.

This sequence belongs to the UbiA prenyltransferase family. Protoheme IX farnesyltransferase subfamily.

It localises to the cell inner membrane. It carries out the reaction heme b + (2E,6E)-farnesyl diphosphate + H2O = Fe(II)-heme o + diphosphate. It functions in the pathway porphyrin-containing compound metabolism; heme O biosynthesis; heme O from protoheme: step 1/1. In terms of biological role, converts heme B (protoheme IX) to heme O by substitution of the vinyl group on carbon 2 of heme B porphyrin ring with a hydroxyethyl farnesyl side group. The sequence is that of Protoheme IX farnesyltransferase 2 from Shewanella baltica (strain OS185).